Reading from the N-terminus, the 217-residue chain is MKFFVDSANIEEIRELQNLSLVDGVTTNPSLILNSGRNILEVTKEICSLVKGPVSAEVAATEFEDMMKEAAVLAKVADNICIKLPLTLDGLKACKALTAEGLKTNLTLCFSANQALLAAKAGATFVSPFIGRLDDCGINGSELLHEIRTIYDNYNFETQILAASIRTVSHVKEAALSGADVATVPPAILKALITHPLTDKGLQIFLNDWKKTGQNIA.

The Schiff-base intermediate with substrate role is filled by K83.

Belongs to the transaldolase family. Type 3B subfamily.

It is found in the cytoplasm. It carries out the reaction D-sedoheptulose 7-phosphate + D-glyceraldehyde 3-phosphate = D-erythrose 4-phosphate + beta-D-fructose 6-phosphate. It functions in the pathway carbohydrate degradation; pentose phosphate pathway; D-glyceraldehyde 3-phosphate and beta-D-fructose 6-phosphate from D-ribose 5-phosphate and D-xylulose 5-phosphate (non-oxidative stage): step 2/3. Transaldolase is important for the balance of metabolites in the pentose-phosphate pathway. The polypeptide is Probable transaldolase (Bartonella tribocorum (strain CIP 105476 / IBS 506)).